Reading from the N-terminus, the 547-residue chain is Chaperonin GroEL (547 aa).

Residues 30-33 (TLGP), Lys51, 87-91 (DGTTT), Gly415, 479-481 (NAA), and Asp495 each bind ATP.

This sequence belongs to the chaperonin (HSP60) family. As to quaternary structure, forms a cylinder of 14 subunits composed of two heptameric rings stacked back-to-back. Interacts with the co-chaperonin GroES.

It is found in the cytoplasm. It catalyses the reaction ATP + H2O + a folded polypeptide = ADP + phosphate + an unfolded polypeptide.. In terms of biological role, together with its co-chaperonin GroES, plays an essential role in assisting protein folding. The GroEL-GroES system forms a nano-cage that allows encapsulation of the non-native substrate proteins and provides a physical environment optimized to promote and accelerate protein folding. The sequence is that of Chaperonin GroEL from Bordetella bronchiseptica (strain ATCC BAA-588 / NCTC 13252 / RB50) (Alcaligenes bronchisepticus).